The chain runs to 170 residues: IMPACT family member YDL177C (170 aa).

Residues 79-98 are disordered; the sequence is KKKGNKANKSNNSHVNKSRN.

The protein belongs to the IMPACT family.

The sequence is that of IMPACT family member YDL177C from Saccharomyces cerevisiae (strain ATCC 204508 / S288c) (Baker's yeast).